Reading from the N-terminus, the 268-residue chain is Ribosomal RNA small subunit methyltransferase A (268 aa).

Positions 21, 23, 48, 69, 94, and 115 each coordinate S-adenosyl-L-methionine.

This sequence belongs to the class I-like SAM-binding methyltransferase superfamily. rRNA adenine N(6)-methyltransferase family. RsmA subfamily.

The protein localises to the cytoplasm. The catalysed reaction is adenosine(1518)/adenosine(1519) in 16S rRNA + 4 S-adenosyl-L-methionine = N(6)-dimethyladenosine(1518)/N(6)-dimethyladenosine(1519) in 16S rRNA + 4 S-adenosyl-L-homocysteine + 4 H(+). In terms of biological role, specifically dimethylates two adjacent adenosines (A1518 and A1519) in the loop of a conserved hairpin near the 3'-end of 16S rRNA in the 30S particle. May play a critical role in biogenesis of 30S subunits. The protein is Ribosomal RNA small subunit methyltransferase A of Saccharophagus degradans (strain 2-40 / ATCC 43961 / DSM 17024).